The following is a 101-amino-acid chain: Chaperone modulatory protein CbpM (101 aa).

This sequence belongs to the CbpM family.

Functionally, interacts with CbpA and inhibits both the DnaJ-like co-chaperone activity and the DNA binding activity of CbpA. Together with CbpA, modulates the activity of the DnaK chaperone system. Does not inhibit the co-chaperone activity of DnaJ. This chain is Chaperone modulatory protein CbpM, found in Escherichia coli O1:K1 / APEC.